Here is a 308-residue protein sequence, read N- to C-terminus: Lipoyl synthase 2 (308 aa).

Positions 49, 54, 60, 75, 79, 82, and 300 each coordinate [4Fe-4S] cluster. In terms of domain architecture, Radical SAM core spans 61–289; it reads YASGTATFLL…KRIAEGLGFK (229 aa).

This sequence belongs to the radical SAM superfamily. Lipoyl synthase family. The cofactor is [4Fe-4S] cluster.

It localises to the cytoplasm. The enzyme catalyses [[Fe-S] cluster scaffold protein carrying a second [4Fe-4S](2+) cluster] + N(6)-octanoyl-L-lysyl-[protein] + 2 oxidized [2Fe-2S]-[ferredoxin] + 2 S-adenosyl-L-methionine + 4 H(+) = [[Fe-S] cluster scaffold protein] + N(6)-[(R)-dihydrolipoyl]-L-lysyl-[protein] + 4 Fe(3+) + 2 hydrogen sulfide + 2 5'-deoxyadenosine + 2 L-methionine + 2 reduced [2Fe-2S]-[ferredoxin]. The protein operates within protein modification; protein lipoylation via endogenous pathway; protein N(6)-(lipoyl)lysine from octanoyl-[acyl-carrier-protein]: step 2/2. Its function is as follows. Catalyzes the radical-mediated insertion of two sulfur atoms into the C-6 and C-8 positions of the octanoyl moiety bound to the lipoyl domains of lipoate-dependent enzymes, thereby converting the octanoylated domains into lipoylated derivatives. In Prochlorococcus marinus (strain SARG / CCMP1375 / SS120), this protein is Lipoyl synthase 2.